The following is a 243-amino-acid chain: Phosphoadenosine 5'-phosphosulfate reductase (243 aa).

Catalysis depends on cysteine 239, which acts as the Nucleophile; cysteine thiosulfonate intermediate.

This sequence belongs to the PAPS reductase family. CysH subfamily.

It is found in the cytoplasm. The enzyme catalyses [thioredoxin]-disulfide + sulfite + adenosine 3',5'-bisphosphate + 2 H(+) = [thioredoxin]-dithiol + 3'-phosphoadenylyl sulfate. Its pathway is sulfur metabolism; hydrogen sulfide biosynthesis; sulfite from sulfate: step 3/3. Functionally, catalyzes the formation of sulfite from phosphoadenosine 5'-phosphosulfate (PAPS) using thioredoxin as an electron donor. This Erwinia tasmaniensis (strain DSM 17950 / CFBP 7177 / CIP 109463 / NCPPB 4357 / Et1/99) protein is Phosphoadenosine 5'-phosphosulfate reductase.